We begin with the raw amino-acid sequence, 321 residues long: Biotin synthase (321 aa).

A Radical SAM core domain is found at 45–271; sequence YYGKKVKLNM…INPTKEIRIA (227 aa). Residues Cys63, Cys67, and Cys70 each coordinate [4Fe-4S] cluster. [2Fe-2S] cluster-binding residues include Cys106, Cys139, Cys199, and Arg269.

Belongs to the radical SAM superfamily. Biotin synthase family. Homodimer. [4Fe-4S] cluster serves as cofactor. [2Fe-2S] cluster is required as a cofactor.

The catalysed reaction is (4R,5S)-dethiobiotin + (sulfur carrier)-SH + 2 reduced [2Fe-2S]-[ferredoxin] + 2 S-adenosyl-L-methionine = (sulfur carrier)-H + biotin + 2 5'-deoxyadenosine + 2 L-methionine + 2 oxidized [2Fe-2S]-[ferredoxin]. It functions in the pathway cofactor biosynthesis; biotin biosynthesis; biotin from 7,8-diaminononanoate: step 2/2. In terms of biological role, catalyzes the conversion of dethiobiotin (DTB) to biotin by the insertion of a sulfur atom into dethiobiotin via a radical-based mechanism. The sequence is that of Biotin synthase from Staphylococcus epidermidis (strain ATCC 35984 / DSM 28319 / BCRC 17069 / CCUG 31568 / BM 3577 / RP62A).